A 380-amino-acid chain; its full sequence is 1-deoxy-D-xylulose 5-phosphate reductoisomerase (380 aa).

Residues Ser-10, Gly-11, Ser-12, Ile-13, Gly-36, Lys-37, Asn-38, and Asn-120 each contribute to the NADPH site. Lys-121 serves as a coordination point for 1-deoxy-D-xylulose 5-phosphate. An NADPH-binding site is contributed by Glu-122. Asp-146 is a Mn(2+) binding site. 4 residues coordinate 1-deoxy-D-xylulose 5-phosphate: Ser-147, Glu-148, Ser-172, and His-195. Glu-148 lines the Mn(2+) pocket. Gly-201 contributes to the NADPH binding site. 1-deoxy-D-xylulose 5-phosphate contacts are provided by Ser-208, Asn-213, Lys-214, and Glu-217. Glu-217 contacts Mn(2+).

The protein belongs to the DXR family. Mg(2+) serves as cofactor. The cofactor is Mn(2+).

The enzyme catalyses 2-C-methyl-D-erythritol 4-phosphate + NADP(+) = 1-deoxy-D-xylulose 5-phosphate + NADPH + H(+). It functions in the pathway isoprenoid biosynthesis; isopentenyl diphosphate biosynthesis via DXP pathway; isopentenyl diphosphate from 1-deoxy-D-xylulose 5-phosphate: step 1/6. Functionally, catalyzes the NADPH-dependent rearrangement and reduction of 1-deoxy-D-xylulose-5-phosphate (DXP) to 2-C-methyl-D-erythritol 4-phosphate (MEP). This is 1-deoxy-D-xylulose 5-phosphate reductoisomerase from Bacillus cereus (strain ATCC 10987 / NRS 248).